The primary structure comprises 179 residues: Large ribosomal subunit protein uL5 (179 aa).

Belongs to the universal ribosomal protein uL5 family. As to quaternary structure, part of the 50S ribosomal subunit; part of the 5S rRNA/L5/L18/L25 subcomplex. Contacts the 5S rRNA and the P site tRNA. Forms a bridge to the 30S subunit in the 70S ribosome.

In terms of biological role, this is one of the proteins that bind and probably mediate the attachment of the 5S RNA into the large ribosomal subunit, where it forms part of the central protuberance. In the 70S ribosome it contacts protein S13 of the 30S subunit (bridge B1b), connecting the 2 subunits; this bridge is implicated in subunit movement. Contacts the P site tRNA; the 5S rRNA and some of its associated proteins might help stabilize positioning of ribosome-bound tRNAs. The polypeptide is Large ribosomal subunit protein uL5 (Rickettsia akari (strain Hartford)).